A 156-amino-acid polypeptide reads, in one-letter code: Nuclear cap-binding protein subunit 2 (156 aa).

S2 bears the N-acetylserine mark. Phosphoserine occurs at positions 13 and 18. MRNA contacts are provided by residues Y20, Y43, 112–116 (RTDWD), 123–127 (RQYGR), and 133–134 (QV). The region spanning 40-118 (CTLYVGNLSF…RIIRTDWDAG (79 aa)) is the RRM domain. Residues 124-156 (QYGRGRSGGQVRDEYREDYDAGRGGYGKLAQKQ) form a disordered region. Positions 134-144 (VRDEYREDYDA) are enriched in basic and acidic residues. Omega-N-methylarginine is present on R146.

The protein belongs to the RRM NCBP2 family. In terms of assembly, component of the nuclear cap-binding complex (CBC), a heterodimer composed of NCBP1/CBP80 and NCBP2/CBP20 that interacts with m7GpppG-capped RNA. Found in a U snRNA export complex with PHAX/RNUXA, NCBP1/CBP80, NCBP2/CBP20, RAN, XPO1 and m7G-capped RNA. Interacts with PHAX/RNUXA, EIF4G1, HNRNPF, HNRNPH1 and ALYREF/THOC4/ALY. Interacts with SRRT/ARS2 and KPNA3.

Its subcellular location is the nucleus. It is found in the cytoplasm. Its function is as follows. Component of the cap-binding complex (CBC), which binds co-transcriptionally to the 5' cap of pre-mRNAs and is involved in various processes such as pre-mRNA splicing, translation regulation, nonsense-mediated mRNA decay, RNA-mediated gene silencing (RNAi) by microRNAs (miRNAs) and mRNA export. The CBC complex is involved in mRNA export from the nucleus via its interaction with ALYREF/THOC4/ALY, leading to the recruitment of the mRNA export machinery to the 5' end of mRNA and to mRNA export in a 5' to 3' direction through the nuclear pore. The CBC complex is also involved in mediating U snRNA and intronless mRNAs export from the nucleus. The CBC complex is essential for a pioneer round of mRNA translation, before steady state translation when the CBC complex is replaced by cytoplasmic cap-binding protein eIF4E. The pioneer round of mRNA translation mediated by the CBC complex plays a central role in nonsense-mediated mRNA decay (NMD), NMD only taking place in mRNAs bound to the CBC complex, but not on eIF4E-bound mRNAs. The CBC complex enhances NMD in mRNAs containing at least one exon-junction complex (EJC) via its interaction with UPF1, promoting the interaction between UPF1 and UPF2. The CBC complex is also involved in 'failsafe' NMD, which is independent of the EJC complex, while it does not participate in Staufen-mediated mRNA decay (SMD). During cell proliferation, the CBC complex is also involved in microRNAs (miRNAs) biogenesis via its interaction with SRRT/ARS2, thereby being required for miRNA-mediated RNA interference. The CBC complex also acts as a negative regulator of PARN, thereby acting as an inhibitor of mRNA deadenylation. In the CBC complex, NCBP2/CBP20 recognizes and binds capped RNAs (m7GpppG-capped RNA) but requires NCBP1/CBP80 to stabilize the movement of its N-terminal loop and lock the CBC into a high affinity cap-binding state with the cap structure. The conventional cap-binding complex with NCBP2 binds both small nuclear RNA (snRNA) and messenger (mRNA) and is involved in their export from the nucleus. The protein is Nuclear cap-binding protein subunit 2 (Ncbp2) of Mus musculus (Mouse).